The chain runs to 122 residues: UPF0102 protein Krad_1407 (122 aa).

This sequence belongs to the UPF0102 family.

This chain is UPF0102 protein Krad_1407, found in Kineococcus radiotolerans (strain ATCC BAA-149 / DSM 14245 / SRS30216).